Consider the following 408-residue polypeptide: Protein ZNF365 (408 aa).

Position 16 is a phosphoserine (Ser16). The C2H2-type; degenerate zinc-finger motif lies at 26-51; sequence FRCPRCGDHTRFRSLSSLRAHLEFSH. Ser139 and Ser146 each carry phosphoserine. The stretch at 170 to 298 forms a coiled coil; sequence VEAVDRTIEK…QLEYYQSQQA (129 aa). Phosphothreonine is present on Thr176. Phosphoserine is present on Ser370.

Homodimers. Interacts with NDE1 and NDEL1. Interacts with DISC1. Interacts with PARP1. Interacts with MCRS1. Expressed in cerebral cortex, hippocampus, olfactory tubercle and striatum.

The protein resides in the cytoplasm. The protein localises to the cytoskeleton. It is found in the microtubule organizing center. It localises to the centrosome. Functionally, involved in the positive regulation of oligodendrocyte differentiation during postnatal growth. Involved in the morphogenesis of basket cells in the somatosensory cortex during embryogenesis. Involved in dendritic arborization, morphogenesis of spine density dendrite, and establishment of postsynaptic dendrite density in cortical pyramidal neurons. Involved in the regulation of neurogenesis. Negatively regulates neurite outgrowth. Involved in homologous recombination (HR) repair pathway. Required for proper resolution of DNA double-strand breaks (DSBs) by HR. Is required for recovery of stalled replication forks, and directly contributes to genomic stability. Interacts with PARP1 and mediates MRE11-dependent DNA end resection during replication fork recovery. Contributes to genomic stability by preventing telomere dysfunction. The polypeptide is Protein ZNF365 (Znf365) (Rattus norvegicus (Rat)).